Here is a 405-residue protein sequence, read N- to C-terminus: Deoxyguanosinetriphosphate triphosphohydrolase-like protein (405 aa).

The HD domain maps to 75–219 (RLTHTIEVAQ…AAVADDIAYN (145 aa)).

It belongs to the dGTPase family. Type 2 subfamily.

This Allorhizobium ampelinum (strain ATCC BAA-846 / DSM 112012 / S4) (Agrobacterium vitis (strain S4)) protein is Deoxyguanosinetriphosphate triphosphohydrolase-like protein.